A 935-amino-acid chain; its full sequence is Protein HIRA (935 aa).

WD repeat units lie at residues 14–58 (HDTG…DKKK), 72–111 (ESQS…NSMG), 131–170 (GHSM…DRIT), 174–213 (DIQL…CVKS), 222–261 (IEET…QTWK), 277–320 (RAMP…KPLF), and 325–362 (IFNH…IGEM). The interval 431-556 (SSDIQLTKSM…RNKKRKVPAT (126 aa)) is disordered. Residues 439 to 468 (SMEDNSKENESKNSEKTMMEERNKQIDVRK) show a composition bias toward basic and acidic residues. Polar residues predominate over residues 480-492 (GTTTADPMTSLSS). Residues 520–542 (DLEDSSDSDDDDEEEEEDMEISD) show a composition bias toward acidic residues.

It belongs to the WD repeat HIR1 family.

It localises to the nucleus. Required for replication-independent chromatin assembly and for the periodic repression of histone gene transcription during the cell cycle. This is Protein HIRA from Caenorhabditis elegans.